We begin with the raw amino-acid sequence, 389 residues long: Methane monooxygenase component A beta chain (389 aa).

M.capsulatus has two forms of methane monooxygenase, a soluble and a membrane-bound type. The soluble type consists of four components (A to D): protein A, comprising three chains, in an alpha-2, beta-2, gamma-2 configuration, is a nonheme iron protein containing an unusual mu-hydroxo bridge structure at its active site and interacts with both oxygen and methane.

It carries out the reaction methane + NADH + O2 + H(+) = methanol + NAD(+) + H2O. The enzyme catalyses methane + NADPH + O2 + H(+) = methanol + NADP(+) + H2O. Responsible for the initial oxygenation of methane to methanol in methanotrophs. It also catalyzes the monohydroxylation of a variety of unactivated alkenes, alicyclic, aromatic and heterocyclic compounds. In Methylococcus capsulatus (strain ATCC 33009 / NCIMB 11132 / Bath), this protein is Methane monooxygenase component A beta chain (mmoY).